A 1082-amino-acid chain; its full sequence is MDASGKGAAGFEGKLFVQTIDARDENEEKYMRAYRAFEETTAGLSDKDFHDLLSSLVSKEKQHEEISLALVYIILTDPSSAPKTYRDLTLLTRDGLGFVTANLAMLVAEKYHKLTDVGRKQLLWLLRELIKNQVLNVDNLAWNILRQASGGDISPKNVALIEGLLDIFTEHRAWLEKDQFLVGTVAYTFVRLIEDHFGPQFVHLRNREVKFVISLIRDRFMDIIPLGREFVRLLQNVGRIPEFDQLWKDMLYNPKSLCPTFNGVWQLLQTRTSRRFLRGRLTPDIERKIHFLTSNVKFGNQKRYQDWFQERYFNTPESQSLRCDLIRFIISAIHPTNDMLCSDIIPRWAIIGWLLTSCTNAVTLANAKLALFYDWLFFDPAKDNIMNVEPGILVMYHSIKNHPLVSCTLLDFLCRIMKNFYPKWEDRIRTGIYNSLRKILEMKVIPNLVPLFESPKLDRELKGMLRETFREFCVPPNSMYMHPGPPQPGMETPMMMHYPGPGGGEQVEQHPPHLMHPAAKAASTAASADDPKFSDDEDDATTKPATTTTTTTTTTKTEDVSDDDDLPLAKVRLLEKPAIAKVALPDTLNGHLEEFLREKSVKTFEPLLQCLGSCGKAALNQEQENYLTESVISVIKQTLPDKSYFPASKTDDNLSESINYPLFAAYRLLYQQEDSCKKRVMALLVAIVTRVSVAGYMLLYFLKVHGKLQGRRKETAGGSTAFKASVYGVLCDALDSVDSVDECIEKDLNLLEKHNTQMFLWILPDMYREFKQTMLNNTTVLRLLVGCIDANNLGDIIYSITQGKLILFDEDGIVEILRKSLEYETFEQVCIWQLVQAHDIPLETFQEIIPELESGAHAEALTAILLLLRAEKPTTELVRLLLSRETESKHRGDPFVTSVLRYWCQEFEEKLSELIAALLTSKYPSNSPNKRKRPSKSAQQNTAPTSEQLLNHLEHFRRSCRHGNGTGTGLFVQNDMQRALQQAFTHSSESQRKQFSDLFALAAEDETSTTVGRRGTSSRGRKAPSNKKETAAEKAAAAAAAAHANNSKKAAEASAKFSDDSSDEDWSKQKASKRRKTLSDSD.

3 disordered regions span residues 483 to 563 (PGPP…VSDD), 923 to 945 (YPSN…TAPT), and 1005 to 1082 (DETS…SDSD). 2 stretches are compositionally biased toward low complexity: residues 517-528 (PAAKAASTAASA) and 542-555 (TKPA…TTTT). The segment covering 936-945 (KSAQQNTAPT) has biased composition (polar residues). Composition is skewed to low complexity over residues 1008–1018 (STTVGRRGTSS) and 1033–1056 (EKAA…ASAK).

The protein belongs to the Integrator subunit 3 family. Belongs to the multiprotein complex Integrator. The core complex associates with protein phosphatase 2A subunits, to form the Integrator-PP2A (INTAC) complex.

Its subcellular location is the nucleus. It is found in the cytoplasm. Its function is as follows. Component of the integrator complex, a multiprotein complex that terminates RNA polymerase II (Pol II) transcription in the promoter-proximal region of genes. The integrator complex provides a quality checkpoint during transcription elongation by driving premature transcription termination of transcripts that are unfavorably configured for transcriptional elongation: the complex terminates transcription by (1) catalyzing dephosphorylation of the C-terminal domain (CTD) of Pol II subunit Polr2A/Rbp1 and Spt5, and (2) degrading the exiting nascent RNA transcript via endonuclease activity. The integrator complex is also involved in the 3'-end processing of the U7 snRNA, and also the spliceosomal snRNAs U1, U2, U4 and U5. The protein is Integrator complex subunit 3 homolog of Anopheles gambiae (African malaria mosquito).